We begin with the raw amino-acid sequence, 335 residues long: Pro-cathepsin H (335 aa).

A signal peptide spans 1 to 22 (MWAVLSLLCAGAWLLGPPACGA). The propeptide occupies 23 to 97 (SNLAVSSFEK…DEIRHKYLWS (75 aa)). 2 N-linked (GlcNAc...) asparagine glycosylation sites follow: N72 and N101. 4 disulfide bridges follow: C102/C327, C138/C181, C172/C214, and C272/C322. A propeptide spanning residues 107 to 115 (GNYLRGTGP) is cleaved from the precursor. C141 is an active-site residue. Residue N230 is glycosylated (N-linked (GlcNAc...) asparagine). Active-site residues include H281 and N301.

It belongs to the peptidase C1 family. As to quaternary structure, composed of cathepsin H and mini chain; disulfide-linked. Cathepsin H may be split into heavy and light chain. All chains are held together by disulfide bonds.

It is found in the lysosome. It catalyses the reaction Hydrolysis of proteins, acting as an aminopeptidase (notably, cleaving Arg-|-Xaa bonds) as well as an endopeptidase.. In terms of biological role, important for the overall degradation of proteins in lysosomes. In Sus scrofa (Pig), this protein is Pro-cathepsin H (CTSH).